Here is a 407-residue protein sequence, read N- to C-terminus: Peptidase T (407 aa).

His81 is a Zn(2+) binding site. Asp83 is an active-site residue. Asp142 contributes to the Zn(2+) binding site. Glu176 functions as the Proton acceptor in the catalytic mechanism. Glu177, Asp199, and His381 together coordinate Zn(2+).

It belongs to the peptidase M20B family. The cofactor is Zn(2+).

The protein resides in the cytoplasm. It carries out the reaction Release of the N-terminal residue from a tripeptide.. In terms of biological role, cleaves the N-terminal amino acid of tripeptides. The chain is Peptidase T from Streptococcus pneumoniae (strain Hungary19A-6).